The primary structure comprises 403 residues: tRNA pseudouridine synthase 4 (403 aa).

The active-site Nucleophile is D75.

Belongs to the pseudouridine synthase TruB family.

It is found in the nucleus. The protein localises to the mitochondrion. The catalysed reaction is uridine(55) in tRNA = pseudouridine(55) in tRNA. It catalyses the reaction a uridine in mRNA = a pseudouridine in mRNA. In terms of biological role, responsible for synthesis of pseudouridine from uracil-55 in the psi GC loop of transfer RNAs. Also catalyzes pseudouridylation of mRNAs with the consensus sequence 5'-GGUUCRA-3'. This is tRNA pseudouridine synthase 4 (PUS4) from Saccharomyces cerevisiae (strain ATCC 204508 / S288c) (Baker's yeast).